Reading from the N-terminus, the 299-residue chain is ATP phosphoribosyltransferase (299 aa).

This sequence belongs to the ATP phosphoribosyltransferase family. Long subfamily. It depends on Mg(2+) as a cofactor.

It is found in the cytoplasm. It carries out the reaction 1-(5-phospho-beta-D-ribosyl)-ATP + diphosphate = 5-phospho-alpha-D-ribose 1-diphosphate + ATP. Its pathway is amino-acid biosynthesis; L-histidine biosynthesis; L-histidine from 5-phospho-alpha-D-ribose 1-diphosphate: step 1/9. With respect to regulation, feedback inhibited by histidine. Its function is as follows. Catalyzes the condensation of ATP and 5-phosphoribose 1-diphosphate to form N'-(5'-phosphoribosyl)-ATP (PR-ATP). Has a crucial role in the pathway because the rate of histidine biosynthesis seems to be controlled primarily by regulation of HisG enzymatic activity. The chain is ATP phosphoribosyltransferase from Shewanella sp. (strain ANA-3).